Consider the following 154-residue polypeptide: Crossover junction endodeoxyribonuclease RuvC (154 aa).

Catalysis depends on residues D7, E67, and D139. Residues D7, E67, and D139 each contribute to the Mg(2+) site.

Belongs to the RuvC family. Homodimer which binds Holliday junction (HJ) DNA. The HJ becomes 2-fold symmetrical on binding to RuvC with unstacked arms; it has a different conformation from HJ DNA in complex with RuvA. In the full resolvosome a probable DNA-RuvA(4)-RuvB(12)-RuvC(2) complex forms which resolves the HJ. The cofactor is Mg(2+).

Its subcellular location is the cytoplasm. It catalyses the reaction Endonucleolytic cleavage at a junction such as a reciprocal single-stranded crossover between two homologous DNA duplexes (Holliday junction).. In terms of biological role, the RuvA-RuvB-RuvC complex processes Holliday junction (HJ) DNA during genetic recombination and DNA repair. Endonuclease that resolves HJ intermediates. Cleaves cruciform DNA by making single-stranded nicks across the HJ at symmetrical positions within the homologous arms, yielding a 5'-phosphate and a 3'-hydroxyl group; requires a central core of homology in the junction. The consensus cleavage sequence is 5'-(A/T)TT(C/G)-3'. Cleavage occurs on the 3'-side of the TT dinucleotide at the point of strand exchange. HJ branch migration catalyzed by RuvA-RuvB allows RuvC to scan DNA until it finds its consensus sequence, where it cleaves and resolves the cruciform DNA. This chain is Crossover junction endodeoxyribonuclease RuvC, found in Prochlorococcus marinus (strain MIT 9313).